An 87-amino-acid polypeptide reads, in one-letter code: HssA/B-like protein 7 (87 aa).

Over residues 1-22 (MSILSALTSISNPMKSTKSSVA) the composition is skewed to polar residues. The tract at residues 1–23 (MSILSALTSISNPMKSTKSSVAN) is disordered.

The protein belongs to the hssA/B family.

The protein is HssA/B-like protein 7 (hssl7) of Dictyostelium discoideum (Social amoeba).